The sequence spans 156 residues: Small ribosomal subunit protein uS7 (156 aa).

This sequence belongs to the universal ribosomal protein uS7 family. Part of the 30S ribosomal subunit. Contacts proteins S9 and S11.

Its function is as follows. One of the primary rRNA binding proteins, it binds directly to 16S rRNA where it nucleates assembly of the head domain of the 30S subunit. Is located at the subunit interface close to the decoding center, probably blocks exit of the E-site tRNA. This Coprothermobacter proteolyticus (strain ATCC 35245 / DSM 5265 / OCM 4 / BT) protein is Small ribosomal subunit protein uS7.